The primary structure comprises 385 residues: Methionyl-tRNA formyltransferase, mitochondrial (385 aa).

The protein belongs to the Fmt family.

The protein resides in the mitochondrion. The catalysed reaction is L-methionyl-tRNA(fMet) + (6R)-10-formyltetrahydrofolate = N-formyl-L-methionyl-tRNA(fMet) + (6S)-5,6,7,8-tetrahydrofolate + H(+). Methionyl-tRNA formyltransferase that formylates methionyl-tRNA in mitochondria and is crucial for translation initiation. This is Methionyl-tRNA formyltransferase, mitochondrial (Mtfmt) from Rattus norvegicus (Rat).